The primary structure comprises 508 residues: MGLPWYRVHTVVLNDPGRLLAVHIMHTALVSGWAGSMALYELAVFDPSDPVLDPMWRQGMFVIPFMTRLGITDSWGGWSISGGTVTNPGIWSYEGVAGAHIVFSGLCFLAAIWHWVYWDLAIFSDDRTGKPSLDLPKIFGIHLFLAGVACFGFGAFHVTGLYGPGIWVSDPYGLTGKVQAVNPAWGAEGFDPFVPGGIASHHIAAGTLGILAGLFHLSVRPPQRLYKGLRMGNIETVLSSSIAAVFFAAFVVAGTMWYGSATTPIELFGPTRYQWDQGYFQQEIYRRVSNGLAENLSLSEAWSKIPEKLAFYDYIGNNPAKGGLFRAGSMDNGDGIAVGWLGHPVFRDKEGRELFVRRMPTFFETFPVVLVDEEGIVRADVPFRRAESKYSVEQVGVTVEFYGGELNGVSYSDPATVKKYARRSQLGEIFELDRATLKSDGVFRSSPRGWFTFGHATFALLFFFGHIWHGARTLFRDVFAGIDPDLDAQVEFGTFQKVGDPTTRKQAV.

6 helical membrane passes run 21-36, 101-115, 140-156, 203-218, 237-252, and 457-472; these read AVHIMHTALVSGWAGS, IVFSGLCFLAAIWHW, GIHLFLAGVACFGFGAF, IAAGTLGILAGLFHLS, VLSSSIAAVFFAAFVV, and TFALLFFFGHIWHGAR.

Belongs to the PsbB/PsbC family. PsbB subfamily. In terms of assembly, PSII is composed of 1 copy each of membrane proteins PsbA, PsbB, PsbC, PsbD, PsbE, PsbF, PsbH, PsbI, PsbJ, PsbK, PsbL, PsbM, PsbT, PsbX, PsbY, PsbZ, Psb30/Ycf12, at least 3 peripheral proteins of the oxygen-evolving complex and a large number of cofactors. It forms dimeric complexes. It depends on Binds multiple chlorophylls. PSII binds additional chlorophylls, carotenoids and specific lipids. as a cofactor.

Its subcellular location is the plastid. The protein localises to the chloroplast thylakoid membrane. Functionally, one of the components of the core complex of photosystem II (PSII). It binds chlorophyll and helps catalyze the primary light-induced photochemical processes of PSII. PSII is a light-driven water:plastoquinone oxidoreductase, using light energy to abstract electrons from H(2)O, generating O(2) and a proton gradient subsequently used for ATP formation. The chain is Photosystem II CP47 reaction center protein from Lolium perenne (Perennial ryegrass).